A 78-amino-acid chain; its full sequence is Beta-defensin 105 (78 aa).

The signal sequence occupies residues 1–27 (MALIRKTFYFLFAMFFILVQLPSGCQA). 3 cysteine pairs are disulfide-bonded: C43-C74, C53-C67, and C57-C73.

The protein belongs to the beta-defensin family. In terms of tissue distribution, specifically expressed in testis.

The protein resides in the secreted. Functionally, has antibacterial activity. The polypeptide is Beta-defensin 105 (DEFB105A) (Homo sapiens (Human)).